The sequence spans 171 residues: ATP synthase subunit b (171 aa).

The chain crosses the membrane as a helical span at residues 3–23; sequence KFLFFIFVFVGISFAGDDTAT.

Belongs to the ATPase B chain family. In terms of assembly, F-type ATPases have 2 components, F(1) - the catalytic core - and F(0) - the membrane proton channel. F(1) has five subunits: alpha(3), beta(3), gamma(1), delta(1), epsilon(1). F(0) has three main subunits: a(1), b(2) and c(10-14). The alpha and beta chains form an alternating ring which encloses part of the gamma chain. F(1) is attached to F(0) by a central stalk formed by the gamma and epsilon chains, while a peripheral stalk is formed by the delta and b chains.

Its subcellular location is the cell inner membrane. Its function is as follows. F(1)F(0) ATP synthase produces ATP from ADP in the presence of a proton or sodium gradient. F-type ATPases consist of two structural domains, F(1) containing the extramembraneous catalytic core and F(0) containing the membrane proton channel, linked together by a central stalk and a peripheral stalk. During catalysis, ATP synthesis in the catalytic domain of F(1) is coupled via a rotary mechanism of the central stalk subunits to proton translocation. Functionally, component of the F(0) channel, it forms part of the peripheral stalk, linking F(1) to F(0). The protein is ATP synthase subunit b of Campylobacter hominis (strain ATCC BAA-381 / DSM 21671 / CCUG 45161 / LMG 19568 / NCTC 13146 / CH001A).